A 90-amino-acid chain; its full sequence is DNA-directed RNA polymerase subunit omega (90 aa).

Positions R69 to R90 are disordered.

Belongs to the RNA polymerase subunit omega family. The RNAP catalytic core consists of 2 alpha, 1 beta, 1 beta' and 1 omega subunit. When a sigma factor is associated with the core the holoenzyme is formed, which can initiate transcription.

The catalysed reaction is RNA(n) + a ribonucleoside 5'-triphosphate = RNA(n+1) + diphosphate. Promotes RNA polymerase assembly. Latches the N- and C-terminal regions of the beta' subunit thereby facilitating its interaction with the beta and alpha subunits. In Vibrio vulnificus (strain CMCP6), this protein is DNA-directed RNA polymerase subunit omega.